The primary structure comprises 99 residues: Large ribosomal subunit protein bL28 (99 aa).

Belongs to the bacterial ribosomal protein bL28 family.

The protein is Large ribosomal subunit protein bL28 of Caulobacter vibrioides (strain ATCC 19089 / CIP 103742 / CB 15) (Caulobacter crescentus).